Consider the following 117-residue polypeptide: Large ribosomal subunit protein bL17 (117 aa).

Belongs to the bacterial ribosomal protein bL17 family. In terms of assembly, part of the 50S ribosomal subunit. Contacts protein L32.

The sequence is that of Large ribosomal subunit protein bL17 from Campylobacter lari (strain RM2100 / D67 / ATCC BAA-1060).